A 343-amino-acid polypeptide reads, in one-letter code: D-alanine--D-alanine ligase (343 aa).

An ATP-grasp domain is found at 132-337 (KNLFSYHKIP…YPDLIDKLIE (206 aa)). Residue 165-220 (DRFLGWPCFVKPANMGSSIGVSKVHSPGEVKKALEKGFYYDRKLIFEEFVEGREIE) participates in ATP binding. The Mg(2+) site is built by Asp291, Glu304, and Asn306.

This sequence belongs to the D-alanine--D-alanine ligase family. Mg(2+) serves as cofactor. Requires Mn(2+) as cofactor.

The protein resides in the cytoplasm. The enzyme catalyses 2 D-alanine + ATP = D-alanyl-D-alanine + ADP + phosphate + H(+). It functions in the pathway cell wall biogenesis; peptidoglycan biosynthesis. Its function is as follows. Cell wall formation. This chain is D-alanine--D-alanine ligase, found in Halothermothrix orenii (strain H 168 / OCM 544 / DSM 9562).